The chain runs to 222 residues: Putative N-acetylmannosamine-6-phosphate 2-epimerase (222 aa).

The protein belongs to the NanE family.

It catalyses the reaction an N-acyl-D-glucosamine 6-phosphate = an N-acyl-D-mannosamine 6-phosphate. The protein operates within amino-sugar metabolism; N-acetylneuraminate degradation; D-fructose 6-phosphate from N-acetylneuraminate: step 3/5. Functionally, converts N-acetylmannosamine-6-phosphate (ManNAc-6-P) to N-acetylglucosamine-6-phosphate (GlcNAc-6-P). In Staphylococcus saprophyticus subsp. saprophyticus (strain ATCC 15305 / DSM 20229 / NCIMB 8711 / NCTC 7292 / S-41), this protein is Putative N-acetylmannosamine-6-phosphate 2-epimerase.